Consider the following 206-residue polypeptide: Guanylate kinase (206 aa).

Residues 7–185 form the Guanylate kinase-like domain; it reads GLLIVISGPS…AVEKIRAIII (179 aa). An ATP-binding site is contributed by 14 to 21; sequence GPSGAGKG.

Belongs to the guanylate kinase family.

It localises to the cytoplasm. The catalysed reaction is GMP + ATP = GDP + ADP. Essential for recycling GMP and indirectly, cGMP. This chain is Guanylate kinase, found in Caldanaerobacter subterraneus subsp. tengcongensis (strain DSM 15242 / JCM 11007 / NBRC 100824 / MB4) (Thermoanaerobacter tengcongensis).